An 853-amino-acid chain; its full sequence is DNA mismatch repair protein MutS (853 aa).

Residue 614–621 (GPNMGGKS) coordinates ATP.

This sequence belongs to the DNA mismatch repair MutS family.

Its function is as follows. This protein is involved in the repair of mismatches in DNA. It is possible that it carries out the mismatch recognition step. This protein has a weak ATPase activity. This is DNA mismatch repair protein MutS from Escherichia coli O81 (strain ED1a).